The primary structure comprises 390 residues: tRNA (guanine(26)-N(2))-dimethyltransferase (390 aa).

In terms of domain architecture, Trm1 methyltransferase spans His4–Ile378. 5 residues coordinate S-adenosyl-L-methionine: Arg37, Arg67, Asp85, Asp112, and Ala113. The Zn(2+) site is built by Cys245, Cys248, Cys265, and Cys268.

Belongs to the class I-like SAM-binding methyltransferase superfamily. Trm1 family.

It catalyses the reaction guanosine(26) in tRNA + 2 S-adenosyl-L-methionine = N(2)-dimethylguanosine(26) in tRNA + 2 S-adenosyl-L-homocysteine + 2 H(+). In terms of biological role, dimethylates a single guanine residue at position 26 of a number of tRNAs using S-adenosyl-L-methionine as donor of the methyl groups. This Methanosphaera stadtmanae (strain ATCC 43021 / DSM 3091 / JCM 11832 / MCB-3) protein is tRNA (guanine(26)-N(2))-dimethyltransferase.